The sequence spans 451 residues: Multidrug export protein MepA (451 aa).

12 helical membrane passes run 26–46, 52–72, 97–117, 139–159, 170–190, 194–214, 245–265, 282–302, 318–338, 355–375, 390–410, and 417–437; these read MIGT…IGFL, ISAI…GNLF, SFSI…ALPF, LKVM…EQFA, IGML…IFGF, VVGA…FFII, IPAF…NLFL, LVQF…PLIA, AVIM…FTIG, ATFI…GFLF, IMAI…NALF, and WSLL…VYLL.

The protein belongs to the multi antimicrobial extrusion (MATE) (TC 2.A.66.1) family. MepA subfamily.

It localises to the cell membrane. Multidrug resistance efflux protein. The sequence is that of Multidrug export protein MepA (mepA) from Staphylococcus aureus (strain bovine RF122 / ET3-1).